Consider the following 227-residue polypeptide: MMLQIPDVLTSDEAAYCRGVLDAAPWVDGNVTSGFQAAMAKNNQQLPQDGAAAREIGAIIVQALNANPLFVSAALPRTILSPLFNRYGVGMGFGDHVDNSVRRDPVTGQTLRTDLSITVFLSDPDDYDGGELVVEDAYGSHLVKLAAGAAILYPASSLHHVTEVTRGVRTASFFWIQSLVRDDAKRGLLLDMDVAIQRLSGAVGTTDPSVLSLTGTYHNLLRMWAEV.

Residues 78–178 enclose the Fe2OG dioxygenase domain; sequence TILSPLFNRY…RTASFFWIQS (101 aa). Fe cation is bound by residues H96, D98, and H159. Residue R169 participates in 2-oxoglutarate binding.

Requires Fe(2+) as cofactor. The cofactor is L-ascorbate.

The sequence is that of PKHD-type hydroxylase Caul_0045 from Caulobacter sp. (strain K31).